We begin with the raw amino-acid sequence, 483 residues long: Rhamnulokinase (483 aa).

11–15 (ASSGR) provides a ligand contact to ATP. Residues G79 and 234-236 (HDT) contribute to the substrate site. Catalysis depends on D235, which acts as the Proton acceptor. T257 contributes to the ATP binding site. Residue N294 participates in substrate binding. Q302 provides a ligand contact to ATP. The cysteines at positions 352 and 369 are disulfide-linked. G401 contributes to the ATP binding site.

This sequence belongs to the rhamnulokinase family. Requires Mg(2+) as cofactor.

The enzyme catalyses L-rhamnulose + ATP = L-rhamnulose 1-phosphate + ADP + H(+). The protein operates within carbohydrate degradation; L-rhamnose degradation; glycerone phosphate from L-rhamnose: step 2/3. Involved in the catabolism of L-rhamnose (6-deoxy-L-mannose). Catalyzes the transfer of the gamma-phosphate group from ATP to the 1-hydroxyl group of L-rhamnulose to yield L-rhamnulose 1-phosphate. The sequence is that of Rhamnulokinase from Listeria monocytogenes serotype 4b (strain F2365).